Consider the following 108-residue polypeptide: Transcription factor AmrZ (108 aa).

Its function is as follows. Functions both as a transcriptional activator and a repressor of multiple genes encoding virulence factors as well as genes involved in environmental adaptation. Represses genes involved in iron homeostasis. Modulates intracellular levels of c-di-GMP which in turn regulates swimming motility and biofilm formation. This is Transcription factor AmrZ from Pseudomonas ogarae (strain DSM 112162 / CECT 30235 / F113).